The chain runs to 358 residues: Alanine racemase (358 aa).

The active-site Proton acceptor; specific for D-alanine is the K35. K35 carries the N6-(pyridoxal phosphate)lysine modification. R130 lines the substrate pocket. Y255 serves as the catalytic Proton acceptor; specific for L-alanine. Residue M303 participates in substrate binding.

It belongs to the alanine racemase family. Pyridoxal 5'-phosphate serves as cofactor.

The enzyme catalyses L-alanine = D-alanine. The protein operates within amino-acid biosynthesis; D-alanine biosynthesis; D-alanine from L-alanine: step 1/1. Functionally, catalyzes the interconversion of L-alanine and D-alanine. May also act on other amino acids. The chain is Alanine racemase (alr) from Shewanella sp. (strain W3-18-1).